The following is a 373-amino-acid chain: Leucine-, isoleucine-, valine-, threonine-, and alanine-binding protein (373 aa).

The N-terminal stretch at 1 to 26 (MKKGTQRLSRLFAAMAIAGFASYSMA) is a signal peptide. A disulfide bridge links C80 with C105.

Belongs to the leucine-binding protein family.

Its subcellular location is the periplasm. Component of the high-affinity leucine, isoleucine, valine transport system I (LIV-I), which is operative without Na(+) and is specific for alanine and threonine, in addition to branched-chain amino acids. Binds L-leucine, L-isoleucine, L-valine, L-threonine and L-alanine with nanomolar affinities. Can also bind L-homoserine with high affinity. The chain is Leucine-, isoleucine-, valine-, threonine-, and alanine-binding protein (braC) from Pseudomonas aeruginosa (strain ATCC 15692 / DSM 22644 / CIP 104116 / JCM 14847 / LMG 12228 / 1C / PRS 101 / PAO1).